Reading from the N-terminus, the 101-residue chain is Replication restart protein PriB (101 aa).

Residues 1–101 enclose the SSB domain; it reads MATNHLVLSG…LHAENVELKT (101 aa).

It belongs to the PriB family. In terms of assembly, homodimer. Interacts with PriA and DnaT. Component of the replication restart primosome. Primosome assembly occurs via a 'hand-off' mechanism. PriA binds to replication forks, subsequently PriB then DnaT bind; DnaT then displaces ssDNA to generate the helicase loading substrate.

Functionally, involved in the restart of stalled replication forks, which reloads the replicative helicase on sites other than the origin of replication; the PriA-PriB pathway is the major replication restart pathway. During primosome assembly it facilitates complex formation between PriA and DnaT on DNA; stabilizes PriA on DNA. Stimulates the DNA unwinding activity of PriA helicase. In Shewanella sediminis (strain HAW-EB3), this protein is Replication restart protein PriB.